A 164-amino-acid polypeptide reads, in one-letter code: Protein-export protein SecB (164 aa).

It belongs to the SecB family. In terms of assembly, homotetramer, a dimer of dimers. One homotetramer interacts with 1 SecA dimer.

It is found in the cytoplasm. Its function is as follows. One of the proteins required for the normal export of preproteins out of the cell cytoplasm. It is a molecular chaperone that binds to a subset of precursor proteins, maintaining them in a translocation-competent state. It also specifically binds to its receptor SecA. This chain is Protein-export protein SecB, found in Janthinobacterium sp. (strain Marseille) (Minibacterium massiliensis).